The primary structure comprises 212 residues: MGTEFNGLFDEWAHTYDSFVQGEDIQYKEVFAHYEDILEDVVNKSFGNVLEFGVGTGNLTNKLLLAGRTVYGIEPSREMRMIAKEKLPKEFSITEGDFLSFEVPTSIDTIVSTYAFHHLTDDEKNVAIAKYSQLLNKGGKIVFADTIFADQDAYDKTVEAAKQRGFHQLANDLQTEYYTRIPVMQTIFENNGFHVTFTRLNHFVWVMEATKQ.

Positions 53, 74, and 97 each coordinate S-adenosyl-L-methionine.

Belongs to the methyltransferase superfamily. YrrT family.

Functionally, could be a S-adenosyl-L-methionine-dependent methyltransferase. This is an uncharacterized protein from Bacillus cereus (strain ZK / E33L).